A 436-amino-acid chain; its full sequence is Gamma-glutamyl phosphate reductase (436 aa).

It belongs to the gamma-glutamyl phosphate reductase family.

It is found in the cytoplasm. It catalyses the reaction L-glutamate 5-semialdehyde + phosphate + NADP(+) = L-glutamyl 5-phosphate + NADPH + H(+). The protein operates within amino-acid biosynthesis; L-proline biosynthesis; L-glutamate 5-semialdehyde from L-glutamate: step 2/2. Catalyzes the NADPH-dependent reduction of L-glutamate 5-phosphate into L-glutamate 5-semialdehyde and phosphate. The product spontaneously undergoes cyclization to form 1-pyrroline-5-carboxylate. The sequence is that of Gamma-glutamyl phosphate reductase from Prochlorococcus marinus (strain MIT 9215).